Reading from the N-terminus, the 188-residue chain is GTP cyclohydrolase 1 (188 aa).

Positions 73, 76, and 144 each coordinate Zn(2+).

This sequence belongs to the GTP cyclohydrolase I family. As to quaternary structure, homomer.

The enzyme catalyses GTP + H2O = 7,8-dihydroneopterin 3'-triphosphate + formate + H(+). Its pathway is cofactor biosynthesis; 7,8-dihydroneopterin triphosphate biosynthesis; 7,8-dihydroneopterin triphosphate from GTP: step 1/1. This is GTP cyclohydrolase 1 from Caldivirga maquilingensis (strain ATCC 700844 / DSM 13496 / JCM 10307 / IC-167).